A 496-amino-acid polypeptide reads, in one-letter code: Lysine--tRNA ligase (496 aa).

Mg(2+) is bound by residues E409 and E416.

This sequence belongs to the class-II aminoacyl-tRNA synthetase family. Homodimer. Mg(2+) serves as cofactor.

The protein resides in the cytoplasm. The enzyme catalyses tRNA(Lys) + L-lysine + ATP = L-lysyl-tRNA(Lys) + AMP + diphosphate. This Streptococcus pneumoniae serotype 4 (strain ATCC BAA-334 / TIGR4) protein is Lysine--tRNA ligase.